Consider the following 387-residue polypeptide: Protoheme IX farnesyltransferase, mitochondrial (387 aa).

8 helical membrane passes run 95–115 (LTVLVVLSTMSSYALAPYPGL), 117–137 (FNTLAWLTMGTALCSISANAF), 183–203 (FLVNPTVGWLGLGNIVLYMGI), 212–232 (IVNTWVGSLVGAIPPLMGWAA), 242–262 (PGGLITAAMLFAWQFPHFNAF), 284–306 (ALNARVSLRYALAFLPLSYAYIS), 311–330 (GPWYAVPATGTNMFLIARAW), and 345–365 (FFASLLHLPLLFTLTLACHMI).

It belongs to the UbiA prenyltransferase family.

The protein localises to the mitochondrion membrane. The catalysed reaction is heme b + (2E,6E)-farnesyl diphosphate + H2O = Fe(II)-heme o + diphosphate. Its function is as follows. Converts protoheme IX and farnesyl diphosphate to heme O. This Schizosaccharomyces pombe (strain 972 / ATCC 24843) (Fission yeast) protein is Protoheme IX farnesyltransferase, mitochondrial (cox10).